The chain runs to 256 residues: Small ribosomal subunit protein eS1 (256 aa).

The span at 1–18 shows a compositional bias: basic residues; that stretch reads MAVGKNKRLSKGKKGVKK. The interval 1–21 is disordered; sequence MAVGKNKRLSKGKKGVKKRTV. Position 2 is an N-acetylalanine; partial (Ala-2).

This sequence belongs to the eukaryotic ribosomal protein eS1 family. Component of the small ribosomal subunit. Mature ribosomes consist of a small (40S) and a large (60S) subunit. The 40S subunit contains about 33 different proteins and 1 molecule of RNA (18S). The 60S subunit contains about 49 different proteins and 3 molecules of RNA (25S, 5.8S and 5S).

The protein localises to the cytoplasm. The polypeptide is Small ribosomal subunit protein eS1 (rps1) (Neosartorya fischeri (strain ATCC 1020 / DSM 3700 / CBS 544.65 / FGSC A1164 / JCM 1740 / NRRL 181 / WB 181) (Aspergillus fischerianus)).